The chain runs to 322 residues: Homoserine kinase (322 aa).

107–117 (PLSSGMGGSAA) contributes to the ATP binding site.

It belongs to the GHMP kinase family. Homoserine kinase subfamily.

It is found in the cytoplasm. It carries out the reaction L-homoserine + ATP = O-phospho-L-homoserine + ADP + H(+). Its pathway is amino-acid biosynthesis; L-threonine biosynthesis; L-threonine from L-aspartate: step 4/5. Its function is as follows. Catalyzes the ATP-dependent phosphorylation of L-homoserine to L-homoserine phosphate. This is Homoserine kinase from Xylella fastidiosa (strain M23).